The following is a 575-amino-acid chain: Homocysteine/cysteine synthase (575 aa).

An N6-(pyridoxal phosphate)lysine modification is found at Lys376.

This sequence belongs to the trans-sulfuration enzymes family. MET7 subfamily. The cofactor is pyridoxal 5'-phosphate.

The protein localises to the cytoplasm. The catalysed reaction is O-acetyl-L-homoserine + methanethiol = L-methionine + acetate + H(+). The enzyme catalyses O-acetyl-L-homoserine + hydrogen sulfide = L-homocysteine + acetate. It carries out the reaction O-acetyl-L-serine + hydrogen sulfide = L-cysteine + acetate. It participates in amino-acid biosynthesis; L-methionine biosynthesis via de novo pathway; L-homocysteine from O-acetyl-L-homoserine. In terms of biological role, plays a role in inorganic sulfur assimilation during sulfur-limited conditions; catalyzes the conversion of O-acetyl-L-homoserine (OAH) into homocysteine in the methionine biosynthesis pathway. Also catalyzes the conversion of O-acetylserine (OAS) into cysteine, the last step in the cysteine biosynthesis pathway. However, it seems that in S.cerevisiae cysteine biosynthesis occurs exclusively through the cystathionine pathway and not via direct incorporation of sulfur into OAS. It therefore has no metabolic role in cysteine biosynthesis and may only have a regulatory role controlling OAS levels. This Saccharomyces cerevisiae (strain ATCC 204508 / S288c) (Baker's yeast) protein is Homocysteine/cysteine synthase.